The sequence spans 369 residues: Beta-1,4-galactosyltransferase 2 (369 aa).

The Cytoplasmic segment spans residues 1 to 15; the sequence is MSRLLGGTLERVCKA. Residues 16–36 form a helical; Signal-anchor for type II membrane protein membrane-spanning segment; sequence VLLLCLLHFLVAVILYFDVYA. Residues 37–369 are Lumenal-facing; it reads QHLAFFSRFS…GRPMSWLNQG (333 aa). A compositionally biased stretch (polar residues) spans 59–75; it reads SSSTNCSRPNATASSSG. The segment at 59 to 90 is disordered; that stretch reads SSSTNCSRPNATASSSGLPEVPSARPGPTAPV. N-linked (GlcNAc...) asparagine glycans are attached at residues Asn-63 and Asn-68. A disulfide bridge connects residues Cys-94 and Cys-136. UDP-alpha-D-galactose-binding positions include 147-151, 186-188, 214-215, and Trp-275; these read PFRHR, FNR, and VD. Cys-208 and Cys-227 are disulfide-bonded. Asp-215 provides a ligand contact to Mn(2+). 277-280 provides a ligand contact to N-acetyl-D-glucosamine; that stretch reads GEDD. His-308 contacts Mn(2+). 308 to 310 is a UDP-alpha-D-galactose binding site; it reads HDR. Arg-320 provides a ligand contact to N-acetyl-D-glucosamine. The N-linked (GlcNAc...) asparagine glycan is linked to Asn-354.

It belongs to the glycosyltransferase 7 family. Requires Mn(2+) as cofactor.

It is found in the golgi apparatus. It localises to the golgi stack membrane. It carries out the reaction D-glucose + UDP-alpha-D-galactose = lactose + UDP + H(+). The catalysed reaction is an N-acetyl-beta-D-glucosaminyl derivative + UDP-alpha-D-galactose = a beta-D-galactosyl-(1-&gt;4)-N-acetyl-beta-D-glucosaminyl derivative + UDP + H(+). It catalyses the reaction N-acetyl-D-glucosamine + UDP-alpha-D-galactose = beta-D-galactosyl-(1-&gt;4)-N-acetyl-D-glucosamine + UDP + H(+). It functions in the pathway protein modification; protein glycosylation. In terms of biological role, responsible for the synthesis of complex-type N-linked oligosaccharides in many glycoproteins as well as the carbohydrate moieties of glycolipids. Can produce lactose. This Cricetulus griseus (Chinese hamster) protein is Beta-1,4-galactosyltransferase 2 (B4GALT2).